The chain runs to 369 residues: Gap junction alpha-5 protein (369 aa).

The Cytoplasmic segment spans residues 2–19 (GDWSFLGEFLEEVHKHST). A helical transmembrane segment spans residues 20-40 (VVGKVWLTVLFIFRMLVLGTA). Over 41–76 (AGPLWGDEQSDFMCDTQQPGCENVCYDKAFPISHVR) the chain is Extracellular. A helical membrane pass occupies residues 77–97 (FWVLQIIFVSTPSLVYMGHAM). The Cytoplasmic segment spans residues 98–169 (HTVRMEEKRK…YSILIRTAME (72 aa)). A helical transmembrane segment spans residues 170–190 (IAFIVGQYILYGIFLETLYIC). Over 191-210 (QRAPCPHPVNCYVSRPTEKN) the chain is Extracellular. A helical membrane pass occupies residues 211 to 231 (VFIIFMLAVAVLSLFLSLAEL). Residues 232-369 (YHLGWKKAKE…SKARSDDLSV (138 aa)) lie on the Cytoplasmic side of the membrane. The segment at 347 to 369 (NEKRRFSKASRASSKARSDDLSV) is disordered.

It belongs to the connexin family. Alpha-type (group II) subfamily. As to quaternary structure, a connexon is composed of a hexamer of connexins. Mostly in heart, and in the whole embryo, liver, stomach, and pectoral muscle.

It is found in the cell membrane. It localises to the cell junction. Its subcellular location is the gap junction. Functionally, one gap junction consists of a cluster of closely packed pairs of transmembrane channels, the connexons, through which materials of low MW diffuse from one cell to a neighboring cell. This is Gap junction alpha-5 protein (GJA5) from Gallus gallus (Chicken).